Here is a 794-residue protein sequence, read N- to C-terminus: Protocadherin beta-6 (794 aa).

The N-terminal stretch at 1-27 is a signal peptide; the sequence is MMQTKVQNKKRQVAFFILLMLWGEVGS. Over 28-688 the chain is Extracellular; sequence ESIQYSVLEE…AQADSLTVYL (661 aa). Cadherin domains follow at residues 34-132, 137-241, 246-345, 350-449, and 454-559; these read VLEE…APEF, MLLK…VPEF, YEAQ…APEL, FISL…APAF, and YTLF…SPFV. N-linked (GlcNAc...) asparagine glycosylation is present at Asn46. Cysteines 95 and 101 form a disulfide. Asn183 is a glycosylation site (N-linked (GlcNAc...) asparagine). The N-linked (GlcNAc...) asparagine glycan is linked to Asn416. A glycan (N-linked (GlcNAc...) asparagine) is linked at Asn565. Residues 566-669 enclose the Cadherin 6 domain; the sequence is GSAPCTELVP…LVDGFSQPYL (104 aa). Residues 689–709 traverse the membrane as a helical segment; sequence VVALASVSSLFLFSVLLFVAV. The Cytoplasmic segment spans residues 710–794; sequence RLCRRSRAAS…PTSRNSFPFS (85 aa). A disordered region spans residues 773-794; it reads PPQGTEREMEETPTSRNSFPFS. A compositionally biased stretch (polar residues) spans 784 to 794; it reads TPTSRNSFPFS.

In terms of assembly, forms homodimers in trans (molecules expressed by two different cells). Forms promiscuous heterodimers in cis (at the plasma membrane of the same cell) with other protocadherins.

It is found in the cell membrane. Functionally, calcium-dependent cell-adhesion protein involved in cells self-recognition and non-self discrimination. Thereby, it is involved in the establishment and maintenance of specific neuronal connections in the brain. The protein is Protocadherin beta-6 of Homo sapiens (Human).